The following is a 192-amino-acid chain: Orotate phosphoribosyltransferase (192 aa).

Residues arginine 101, lysine 102, lysine 105, histidine 107, and 129-137 (EDVITTGGS) contribute to the 5-phospho-alpha-D-ribose 1-diphosphate site. Residues threonine 133 and arginine 161 each coordinate orotate.

Belongs to the purine/pyrimidine phosphoribosyltransferase family. PyrE subfamily. Homodimer. Requires Mg(2+) as cofactor.

It catalyses the reaction orotidine 5'-phosphate + diphosphate = orotate + 5-phospho-alpha-D-ribose 1-diphosphate. Its pathway is pyrimidine metabolism; UMP biosynthesis via de novo pathway; UMP from orotate: step 1/2. In terms of biological role, catalyzes the transfer of a ribosyl phosphate group from 5-phosphoribose 1-diphosphate to orotate, leading to the formation of orotidine monophosphate (OMP). The protein is Orotate phosphoribosyltransferase of Sorangium cellulosum (strain So ce56) (Polyangium cellulosum (strain So ce56)).